The chain runs to 614 residues: Zinc finger protein 276 (614 aa).

The tract at residues 1-50 (MKRDRLGRFLSPGSSRQCGASDGGGGVSRTRGRPSLSGGPRVDGATARRA) is disordered. The ZAD domain maps to 77-163 (GHCRLCHGKF…LQRVNASPAG (87 aa)). Positions 79, 82, 136, and 139 each coordinate Zn(2+). Residues 268 to 420 (APRLPQHRGW…KKPGPKPGWK (153 aa)) form a disordered region. Positions 357-369 (SDLSEGDVLSEDE) are enriched in acidic residues. Residues 386 to 408 (YPERKVSGKKSESKEAKKSEEPR) are compositionally biased toward basic and acidic residues. A compositionally biased stretch (basic residues) spans 409-420 (IRKKPGPKPGWK). 5 C2H2-type zinc fingers span residues 434 to 458 (YKCP…IKEH), 465 to 490 (RPCP…KLIH), 496 to 518 (YICD…QMRH), 524 to 546 (LQCE…MTKH), and 554 to 577 (FACD…SMVH). Positions 583–614 (QDKALPLEAEPPPGPPSPSVTTEGQAVKPEPT) are disordered. Positions 591 to 600 (AEPPPGPPSP) are enriched in pro residues.

It localises to the nucleus. It is found in the chromosome. The protein resides in the centromere. The protein localises to the kinetochore. In terms of biological role, may be involved in transcriptional regulation. The polypeptide is Zinc finger protein 276 (ZNF276) (Homo sapiens (Human)).